We begin with the raw amino-acid sequence, 110 residues long: Large ribosomal subunit protein uL22 (110 aa).

It belongs to the universal ribosomal protein uL22 family. Part of the 50S ribosomal subunit.

Its function is as follows. This protein binds specifically to 23S rRNA; its binding is stimulated by other ribosomal proteins, e.g. L4, L17, and L20. It is important during the early stages of 50S assembly. It makes multiple contacts with different domains of the 23S rRNA in the assembled 50S subunit and ribosome. Functionally, the globular domain of the protein is located near the polypeptide exit tunnel on the outside of the subunit, while an extended beta-hairpin is found that lines the wall of the exit tunnel in the center of the 70S ribosome. The chain is Large ribosomal subunit protein uL22 from Klebsiella pneumoniae (strain 342).